A 175-amino-acid polypeptide reads, in one-letter code: RNA pyrophosphohydrolase (175 aa).

One can recognise a Nudix hydrolase domain in the interval 6-149; it reads GYRPNVGIVI…KRDVYRRVMK (144 aa). Positions 38–59 match the Nudix box motif; that stretch reads GGINAGETAEQAMYRELFEEVG.

The protein belongs to the Nudix hydrolase family. RppH subfamily. The cofactor is a divalent metal cation.

Functionally, accelerates the degradation of transcripts by removing pyrophosphate from the 5'-end of triphosphorylated RNA, leading to a more labile monophosphorylated state that can stimulate subsequent ribonuclease cleavage. The polypeptide is RNA pyrophosphohydrolase (Sodalis glossinidius (strain morsitans)).